The sequence spans 1832 residues: Multifunctional protein pyr-3 (1832 aa).

Positions 2–400 are GATase (Glutamine amidotransferase); the sequence is AATVYRPATA…PGPRDTEFLF (399 aa). L-glutamine-binding residues include Ser64, Gly273, and Gly275. The 186-residue stretch at 228–413 folds into the Glutamine amidotransferase type-1 domain; sequence RILCLDVGMK…IQTVAKCTTD (186 aa). Catalysis depends on Cys302, which acts as the Nucleophile; for GATase activity. Leu303, Gln306, Asn344, Gly346, and Tyr347 together coordinate L-glutamine. Active-site for GATase activity residues include His386 and Glu388. The tract at residues 401–442 is linker; that stretch reads DVFIQTVAKCTTDNTLLQKGVEFPGGTTEENERLHPRVDVKK. The interval 443–983 is CPSase A; sequence VLVLGSGGLS…SEHDVSFEDR (541 aa). Positions 443-1484 are CPSase (Carbamoyl phosphate synthase); the sequence is VLVLGSGGLS…TNVKNAKILV (1042 aa). Arg560, Arg600, Gly606, Gly607, Arg637, Met639, Glu644, Gly670, Ile671, His672, Gln713, and Glu727 together coordinate ATP. ATP-grasp domains are found at residues 564–756 and 1102–1293; these read ARSM…KLGL and SRML…KAIM. Mg(2+) contacts are provided by Gln713, Glu727, and Asn729. The Mn(2+) site is built by Gln713, Glu727, and Asn729. The CPSase B stretch occupies residues 984–1484; sequence GVMVLGSGVY…TNVKNAKILV (501 aa). Residues Arg1138, Lys1177, Ile1179, Glu1184, Gly1209, Val1210, His1211, Ser1212, Gln1252, and Glu1264 each coordinate ATP. Mg(2+) is bound by residues Gln1252, Glu1264, and Asn1266. Gln1252, Glu1264, and Asn1266 together coordinate Mn(2+). Residues 1359–1507 form the MGS-like domain; sequence FKVPKKNILL…RDYQTSHTPL (149 aa). The segment at 1485-1528 is linker; the sequence is EAIARYRDMEIGERDYQTSHTPLQLSGQVNFTLQDSLSRPHSFK. Residues 1529–1832 are ATCase (Aspartate transcarbamylase); sequence KAHVLSVEQY…MALLALVMSG (304 aa). Carbamoyl phosphate is bound by residues Arg1581 and Thr1582. Lys1609 lines the L-aspartate pocket. 3 residues coordinate carbamoyl phosphate: Arg1630, His1658, and Gln1661. 2 residues coordinate L-aspartate: Arg1691 and Arg1754. Residues Leu1793 and Pro1794 each coordinate carbamoyl phosphate.

This sequence in the N-terminal section; belongs to the CarA family. The protein in the central section; belongs to the CarB family. It in the C-terminal section; belongs to the aspartate/ornithine carbamoyltransferase superfamily. ATCase family. The cofactor is Mg(2+). It depends on Mn(2+) as a cofactor.

It is found in the cytoplasm. It localises to the nucleus. It carries out the reaction hydrogencarbonate + L-glutamine + 2 ATP + H2O = carbamoyl phosphate + L-glutamate + 2 ADP + phosphate + 2 H(+). It catalyses the reaction L-glutamine + H2O = L-glutamate + NH4(+). The enzyme catalyses hydrogencarbonate + NH4(+) + 2 ATP = carbamoyl phosphate + 2 ADP + phosphate + 2 H(+). The catalysed reaction is carbamoyl phosphate + L-aspartate = N-carbamoyl-L-aspartate + phosphate + H(+). Its pathway is pyrimidine metabolism; UMP biosynthesis via de novo pathway; (S)-dihydroorotate from bicarbonate: step 1/3. The protein operates within pyrimidine metabolism; UMP biosynthesis via de novo pathway; (S)-dihydroorotate from bicarbonate: step 2/3. Both CPSase and ATCase activities are feedback inhibited by the end product UTP. Multifunctional protein that encodes the first 2 enzymatic activities of the de novo pyrimidine pathway: carbamoylphosphate synthetase (CPSase; EC 6.3.5.5) and aspartate transcarbamylase (ATCase; EC 2.1.3.2). The CPSase-function is accomplished in 2 steps, by a glutamine-dependent amidotransferase activity (GATase) that binds and cleaves glutamine to produce ammonia, followed by an ammonium-dependent carbamoyl phosphate synthetase, which reacts with the ammonia, hydrogencarbonate and ATP to form carbamoyl phosphate. The endogenously produced carbamoyl phosphate is sequestered and channeled to the ATCase active site. ATCase then catalyzes the formation of carbamoyl-L-aspartate from L-aspartate and carbamoyl phosphate. The chain is Multifunctional protein pyr-3 (pyr-3) from Neurospora crassa (strain ATCC 24698 / 74-OR23-1A / CBS 708.71 / DSM 1257 / FGSC 987).